We begin with the raw amino-acid sequence, 352 residues long: MLELNFSQTLGTHCLTLNETLPASGITAIFGVSGAGKTSLINAISGLTRPQKGRIALNGRVLHDAENGICLTPEKRRIGYVFQDARLFPHYKVRGNLRYGMAKSMTGQFDKLVSLLGIEALLDRLPGSLSGGEKQRVAIGRALLTAPELLLLDEPLASLDIPRKRELLPYLQRLAREINIPMLYVSHSLDEILHLADKVMVLEDGQVKAFGPLEEVWGSSVMHPWLPKEQQSSILKVSVLEHHPHYAMTALALGDQHLWVNKLNQPLQSTLRIRIQASDVSLVLQPPQQTSIRNVLRAKVANCYDDNGQVEVQLEIGGRTLWARISPWARDELNIKPGLWLYAQVKSVSITA.

The ABC transporter domain maps to 1–229 (MLELNFSQTL…SVMHPWLPKE (229 aa)). 31–38 (GVSGAGKT) lines the ATP pocket. A Mop domain is found at 289–352 (QTSIRNVLRA…AQVKSVSITA (64 aa)).

Belongs to the ABC transporter superfamily. Molybdate importer (TC 3.A.1.8) family. The complex is composed of two ATP-binding proteins (ModC), two transmembrane proteins (ModB) and a solute-binding protein (ModA).

The protein resides in the cell inner membrane. It carries out the reaction molybdate(out) + ATP + H2O = molybdate(in) + ADP + phosphate + H(+). Functionally, part of the ABC transporter complex ModABC involved in molybdenum import. Responsible for energy coupling to the transport system. The chain is Molybdenum import ATP-binding protein ModC from Salmonella paratyphi A (strain ATCC 9150 / SARB42).